Reading from the N-terminus, the 694-residue chain is Zinc finger BED domain-containing protein 5 (694 aa).

The BED-type zinc finger occupies 109–165; sequence RKYDESYLSFGFTYFGNRDAPHAQCVLCKKILSNSSLAPSKLRRHLETKHAAYKDKD. Positions 133, 136, 153, and 158 each coordinate Zn(2+).

In Canis lupus familiaris (Dog), this protein is Zinc finger BED domain-containing protein 5 (ZBED5).